Reading from the N-terminus, the 220-residue chain is Deoxyribose-phosphate aldolase (220 aa).

The active-site Proton donor/acceptor is the D89. The active-site Schiff-base intermediate with acetaldehyde is the K151. K180 functions as the Proton donor/acceptor in the catalytic mechanism.

This sequence belongs to the DeoC/FbaB aldolase family. DeoC type 1 subfamily.

It localises to the cytoplasm. The catalysed reaction is 2-deoxy-D-ribose 5-phosphate = D-glyceraldehyde 3-phosphate + acetaldehyde. The protein operates within carbohydrate degradation; 2-deoxy-D-ribose 1-phosphate degradation; D-glyceraldehyde 3-phosphate and acetaldehyde from 2-deoxy-alpha-D-ribose 1-phosphate: step 2/2. Catalyzes a reversible aldol reaction between acetaldehyde and D-glyceraldehyde 3-phosphate to generate 2-deoxy-D-ribose 5-phosphate. This is Deoxyribose-phosphate aldolase from Streptococcus pneumoniae (strain 70585).